We begin with the raw amino-acid sequence, 250 residues long: Triosephosphate isomerase (250 aa).

Asn-9–Lys-11 lines the substrate pocket. The active-site Electrophile is the His-95. The active-site Proton acceptor is the Glu-167. Residues Gly-173, Ser-212, and Gly-233–Gly-234 contribute to the substrate site.

This sequence belongs to the triosephosphate isomerase family. In terms of assembly, homodimer.

It is found in the cytoplasm. The enzyme catalyses D-glyceraldehyde 3-phosphate = dihydroxyacetone phosphate. The protein operates within carbohydrate biosynthesis; gluconeogenesis. It functions in the pathway carbohydrate degradation; glycolysis; D-glyceraldehyde 3-phosphate from glycerone phosphate: step 1/1. In terms of biological role, involved in the gluconeogenesis. Catalyzes stereospecifically the conversion of dihydroxyacetone phosphate (DHAP) to D-glyceraldehyde-3-phosphate (G3P). The protein is Triosephosphate isomerase of Endomicrobium trichonymphae.